Reading from the N-terminus, the 542-residue chain is MFS-type efflux pump MMF1 (542 aa).

A run of 8 helical transmembrane segments spans residues 24-44, 51-71, 98-118, 124-144, 151-171, 179-199, 215-235, and 248-268; these read WTIFAALMLIAFLAALDMTMI, IVAALPPSSIAANWITSAFLL, VIFLVGSIVCATAKSVLVLVV, GLGGGGIHALSEIIMSDLTTL, FGLIALVFAVAGFIAPVLGGV, WIFWINLPIGAVALVLLVLFL, LDLVGNAILFGSVTAVLIAVT, and VWVPLVVGLIGLVAFLMVEWI. Asparagine 285 carries N-linked (GlcNAc...) asparagine glycosylation. 6 helical membrane-spanning segments follow: residues 296–316, 326–346, 355–375, 384–404, 419–439, and 490–510; these read FLHGVIFYGIIYMVPIYFQAI, IWSFPLTAPSTPLALIAGLLI, LIFIGWALMAGGVGWLTHWSV, ISQIIAGAGIGIMFPITLPPI, AYAFSRTFGAVWGITGATTIF, and ISDSFWLFVPLAIIGFASTFL.

This sequence belongs to the major facilitator superfamily.

It is found in the cell membrane. In terms of biological role, glycosyltransferase; part of the gene cluster that mediates the biosynthesis of mannosylerythritol lipids (MELs), surface-active substances that enhance the availability of water-insoluble substrates. MMF1 is directly involved in the secretiopn of MALs. The sequence is that of MFS-type efflux pump MMF1 from Pseudozyma antarctica (strain T-34) (Yeast).